Here is a 221-residue protein sequence, read N- to C-terminus: Urease accessory protein UreF (221 aa).

This sequence belongs to the UreF family. In terms of assembly, ureD, UreF and UreG form a complex that acts as a GTP-hydrolysis-dependent molecular chaperone, activating the urease apoprotein by helping to assemble the nickel containing metallocenter of UreC. The UreE protein probably delivers the nickel.

It is found in the cytoplasm. Its function is as follows. Required for maturation of urease via the functional incorporation of the urease nickel metallocenter. The chain is Urease accessory protein UreF from Teredinibacter turnerae (strain ATCC 39867 / T7901).